Consider the following 170-residue polypeptide: Macro domain-containing protein DR_2288 (170 aa).

In terms of domain architecture, Macro spans 1–170 (MPLELVQGDI…HVFERALAQL (170 aa)).

Belongs to the MacroD-type family.

The sequence is that of Macro domain-containing protein DR_2288 from Deinococcus radiodurans (strain ATCC 13939 / DSM 20539 / JCM 16871 / CCUG 27074 / LMG 4051 / NBRC 15346 / NCIMB 9279 / VKM B-1422 / R1).